The sequence spans 414 residues: Putative transporter AmpG 4 (414 aa).

12 consecutive transmembrane segments (helical) span residues isoleucine 15–valine 35, isoleucine 44–tryptophan 63, tryptophan 84–proline 104, threonine 109–valine 129, valine 150–isoleucine 170, leucine 177–asparagine 197, phenylalanine 230–alanine 250, isoleucine 268–valine 288, phenylalanine 295–leucine 315, alanine 324–valine 344, tyrosine 360–glycine 379, and glycine 389–asparagine 409.

Belongs to the major facilitator superfamily.

Its subcellular location is the cell inner membrane. The polypeptide is Putative transporter AmpG 4 (ampG4) (Rickettsia felis (strain ATCC VR-1525 / URRWXCal2) (Rickettsia azadi)).